The following is a 109-amino-acid chain: Small ribosomal subunit protein uS10 (109 aa).

Belongs to the universal ribosomal protein uS10 family. As to quaternary structure, part of the 30S ribosomal subunit.

Involved in the binding of tRNA to the ribosomes. The polypeptide is Small ribosomal subunit protein uS10 (Koribacter versatilis (strain Ellin345)).